The following is a 298-amino-acid chain: Ethanolamine ammonia-lyase small subunit (298 aa).

Adenosylcob(III)alamin is bound by residues V210, E231, and C261.

This sequence belongs to the EutC family. The basic unit is a heterodimer which dimerizes to form tetramers. The heterotetramers trimerize; 6 large subunits form a core ring with 6 small subunits projecting outwards. It depends on adenosylcob(III)alamin as a cofactor.

It localises to the bacterial microcompartment. It carries out the reaction ethanolamine = acetaldehyde + NH4(+). The protein operates within amine and polyamine degradation; ethanolamine degradation. Functionally, catalyzes the deamination of various vicinal amino-alcohols to oxo compounds. Allows this organism to utilize ethanolamine as the sole source of nitrogen and carbon in the presence of external vitamin B12. This is Ethanolamine ammonia-lyase small subunit from Salmonella dublin (strain CT_02021853).